Here is a 223-residue protein sequence, read N- to C-terminus: Large ribosomal subunit protein uL4 (223 aa).

The disordered stretch occupies residues 49–106 (AAARQGTHSTKTRGEVSGGGRKPYRQKGTGRARQGSTRAPQFTGGGVVHGPKPRDYSQ).

The protein belongs to the universal ribosomal protein uL4 family. In terms of assembly, part of the 50S ribosomal subunit.

In terms of biological role, one of the primary rRNA binding proteins, this protein initially binds near the 5'-end of the 23S rRNA. It is important during the early stages of 50S assembly. It makes multiple contacts with different domains of the 23S rRNA in the assembled 50S subunit and ribosome. Forms part of the polypeptide exit tunnel. The protein is Large ribosomal subunit protein uL4 of Mycobacterium bovis (strain ATCC BAA-935 / AF2122/97).